Here is a 122-residue protein sequence, read N- to C-terminus: Ig heavy chain V region M603 (122 aa).

In terms of domain architecture, Ig-like spans 1-121; sequence EVKLVESGGG…WGAGTTVTVS (121 aa).

The polypeptide is Ig heavy chain V region M603 (Mus musculus (Mouse)).